A 1220-amino-acid chain; its full sequence is DNA-directed RNA polymerase subunit beta' (1220 aa).

Zn(2+) contacts are provided by C60, C62, C75, and C78. Mg(2+)-binding residues include D449, D451, and D453. The Zn(2+) site is built by C818, C892, C899, and C902.

The protein belongs to the RNA polymerase beta' chain family. As to quaternary structure, the RNAP catalytic core consists of 2 alpha, 1 beta, 1 beta' and 1 omega subunit. When a sigma factor is associated with the core the holoenzyme is formed, which can initiate transcription. Mg(2+) is required as a cofactor. It depends on Zn(2+) as a cofactor.

The catalysed reaction is RNA(n) + a ribonucleoside 5'-triphosphate = RNA(n+1) + diphosphate. DNA-dependent RNA polymerase catalyzes the transcription of DNA into RNA using the four ribonucleoside triphosphates as substrates. This is DNA-directed RNA polymerase subunit beta' from Lacticaseibacillus casei (strain BL23) (Lactobacillus casei).